Reading from the N-terminus, the 130-residue chain is UPF0251 protein Swol_2090 (130 aa).

It belongs to the UPF0251 family.

The protein is UPF0251 protein Swol_2090 of Syntrophomonas wolfei subsp. wolfei (strain DSM 2245B / Goettingen).